We begin with the raw amino-acid sequence, 351 residues long: Histidinol-phosphate aminotransferase (351 aa).

The residue at position 213 (lysine 213) is an N6-(pyridoxal phosphate)lysine.

The protein belongs to the class-II pyridoxal-phosphate-dependent aminotransferase family. Histidinol-phosphate aminotransferase subfamily. Homodimer. It depends on pyridoxal 5'-phosphate as a cofactor.

The enzyme catalyses L-histidinol phosphate + 2-oxoglutarate = 3-(imidazol-4-yl)-2-oxopropyl phosphate + L-glutamate. It functions in the pathway amino-acid biosynthesis; L-histidine biosynthesis; L-histidine from 5-phospho-alpha-D-ribose 1-diphosphate: step 7/9. The chain is Histidinol-phosphate aminotransferase from Thermoanaerobacter sp. (strain X514).